Consider the following 228-residue polypeptide: Large ribosomal subunit protein bL25 (228 aa).

Positions 1 to 24 (MATVMELKATARPKSGKGAARAER) are disordered.

It belongs to the bacterial ribosomal protein bL25 family. CTC subfamily. In terms of assembly, part of the 50S ribosomal subunit; part of the 5S rRNA/L5/L18/L25 subcomplex. Contacts the 5S rRNA. Binds to the 5S rRNA independently of L5 and L18.

This is one of the proteins that binds to the 5S RNA in the ribosome where it forms part of the central protuberance. The polypeptide is Large ribosomal subunit protein bL25 (Nitrobacter winogradskyi (strain ATCC 25391 / DSM 10237 / CIP 104748 / NCIMB 11846 / Nb-255)).